The primary structure comprises 366 residues: Aminomethyltransferase (366 aa).

This sequence belongs to the GcvT family. As to quaternary structure, the glycine cleavage system is composed of four proteins: P, T, L and H.

It carries out the reaction N(6)-[(R)-S(8)-aminomethyldihydrolipoyl]-L-lysyl-[protein] + (6S)-5,6,7,8-tetrahydrofolate = N(6)-[(R)-dihydrolipoyl]-L-lysyl-[protein] + (6R)-5,10-methylene-5,6,7,8-tetrahydrofolate + NH4(+). Its function is as follows. The glycine cleavage system catalyzes the degradation of glycine. The polypeptide is Aminomethyltransferase (Bacillus cereus (strain ZK / E33L)).